The chain runs to 57 residues: COP9 signalosome complex subunit 9 (57 aa).

The protein belongs to the CSN9 family. Component of the CSN complex, probably composed of cops1, cops2, cops3, cops4, cops5, cops6, cops7, cops8 and cops9.

It localises to the nucleus. It is found in the cytoplasm. Its subcellular location is the nucleoplasm. In terms of biological role, component of the COP9 signalosome complex (CSN), a complex involved in various cellular and developmental processes. The CSN complex is an essential regulator of the ubiquitin (Ubl) conjugation pathway by mediating the deneddylation of the cullin subunits of SCF-type E3 ligase complexes, leading to decrease the Ubl ligase activity. May play a role in cell proliferation. The chain is COP9 signalosome complex subunit 9 from Danio rerio (Zebrafish).